A 209-amino-acid polypeptide reads, in one-letter code: MVDFYYLPGSSPCRSVIMTAKAVGVELNKKLLNLQAGEHLKPEFLKINPQHTIPTLVDNGFALWESRAIQVYLVEKYGKTDSLYPKCPKKRAVINQRLYFDMGTLYQSFANYYYPQVFAKAPADPEAFKKIEAAFEFLNTFLEGQDYAAGDSLTVADIALVATVSTFEVAKFEISKYANVNRWYENAKKVTPGWEENWAGCLEFKKYFE.

A GST N-terminal domain is found at 1-81; that stretch reads MVDFYYLPGS…YLVEKYGKTD (81 aa). Residues serine 10, 51–53, and 65–67 contribute to the glutathione site; these read HTI and ESR. Residues 87-208 form the GST C-terminal domain; it reads CPKKRAVINQ…AGCLEFKKYF (122 aa).

It belongs to the GST superfamily. Delta family. Homodimer.

The catalysed reaction is RX + glutathione = an S-substituted glutathione + a halide anion + H(+). It carries out the reaction 1,1,1-trichloro-2,2-bis(4-chlorophenyl)ethane = 1,1-dichloro-2,2-bis(4-chlorophenyl)ethylene + chloride + H(+). Conjugation of reduced glutathione to a wide number of exogenous and endogenous hydrophobic electrophiles. Has DDT dehydrochlorinase activity. May be involved in detoxification. In Drosophila melanogaster (Fruit fly), this protein is Glutathione S-transferase D1.